We begin with the raw amino-acid sequence, 273 residues long: tRNA (guanine-N(7)-)-methyltransferase (273 aa).

The tract at residues 1–32 is disordered; the sequence is MSATAKKSAAQLQREEEEARKKLKRLSKQGGV. S-adenosyl-L-methionine contacts are provided by residues glycine 88, 111-112, 150-151, and cysteine 170; these read EI and NC. Residue aspartate 173 is part of the active site. 248-250 contacts S-adenosyl-L-methionine; it reads TEE.

This sequence belongs to the class I-like SAM-binding methyltransferase superfamily. TrmB family. Forms a complex with trm82.

The protein resides in the nucleus. The enzyme catalyses guanosine(46) in tRNA + S-adenosyl-L-methionine = N(7)-methylguanosine(46) in tRNA + S-adenosyl-L-homocysteine. It functions in the pathway tRNA modification; N(7)-methylguanine-tRNA biosynthesis. Catalyzes the formation of N(7)-methylguanine at position 46 (m7G46) in tRNA. This Schizosaccharomyces pombe (strain 972 / ATCC 24843) (Fission yeast) protein is tRNA (guanine-N(7)-)-methyltransferase (trm8).